A 640-amino-acid polypeptide reads, in one-letter code: Threonine--tRNA ligase (640 aa).

In terms of domain architecture, TGS spans 1 to 61 (MPIITLPNGD…TEDSTLQIIT (61 aa)). The segment at 242–533 (DHRKIGKALD…LIEHYAGFMP (292 aa)) is catalytic. Zn(2+) contacts are provided by C333, H384, and H510.

This sequence belongs to the class-II aminoacyl-tRNA synthetase family. In terms of assembly, homodimer. It depends on Zn(2+) as a cofactor.

The protein localises to the cytoplasm. It carries out the reaction tRNA(Thr) + L-threonine + ATP = L-threonyl-tRNA(Thr) + AMP + diphosphate + H(+). Catalyzes the attachment of threonine to tRNA(Thr) in a two-step reaction: L-threonine is first activated by ATP to form Thr-AMP and then transferred to the acceptor end of tRNA(Thr). Also edits incorrectly charged L-seryl-tRNA(Thr). This is Threonine--tRNA ligase from Acinetobacter baumannii (strain SDF).